Consider the following 527-residue polypeptide: MAEPTQPLLTDSNSSSPRSLDDTIESYIGSFGWAQFLQAALVSFSGVFDAQQTFISVFTDSEPTWHCTDSNSICHESISNICILPKTAWSWDYSPHVSVISEWGLQCAGSFVKGLPESSFFVGCLIGGLVLSTLADSSLGRKNMLFLSCLVMAISTMLTVFSPNIWVYAVLRFVNGFGRATIGTCALVLSTELVGKKWRGRVGIMSFFGFMLGFLSLPLMAYMNRGSSWRILYAWTSIPTIIYCVLVRFFVCESPRWLFVRGRREEAISILKRVASIPSTDVSSGGAISMSFSSLPFEEDEEKPSTNVNIFTTMKVLVEKRWALKRLSAVMAIAFGIGLVYYGMPLALSNLDFNIYLSAAFNALMDLPANLITLFLVDKLSRRNALIGFTALGGVSSVLIFALHNMRIGNHGALQLALELISYFSACSAFNMEMIYTIELFPTCVRNSAIAMARQALVLGGVFSPIMVAAGRKNAFWSFGLFGLAIGLLGLFAVGLPETRGSDLCDTMDEEECKDRRSKVAVNNVIA.

Over 1–27 (MAEPTQPLLTDSNSSSPRSLDDTIESY) the chain is Cytoplasmic. The helical transmembrane segment at 28–48 (IGSFGWAQFLQAALVSFSGVF) threads the bilayer. Residues 49-119 (DAQQTFISVF…SFVKGLPESS (71 aa)) are Extracellular-facing. Residues 120-140 (FFVGCLIGGLVLSTLADSSLG) traverse the membrane as a helical segment. Over 141-149 (RKNMLFLSC) the chain is Cytoplasmic. A helical transmembrane segment spans residues 150-170 (LVMAISTMLTVFSPNIWVYAV). Over 171–176 (LRFVNG) the chain is Extracellular. Residues 177 to 195 (FGRATIGTCALVLSTELVG) traverse the membrane as a helical segment. 190-197 (STELVGKK) contacts ATP. Over 196 to 201 (KKWRGR) the chain is Cytoplasmic. A helical membrane pass occupies residues 202 to 222 (VGIMSFFGFMLGFLSLPLMAY). Residues 223-230 (MNRGSSWR) are Extracellular-facing. A helical membrane pass occupies residues 231–251 (ILYAWTSIPTIIYCVLVRFFV). Over 252–326 (CESPRWLFVR…LVEKRWALKR (75 aa)) the chain is Cytoplasmic. Residues 327-347 (LSAVMAIAFGIGLVYYGMPLA) form a helical membrane-spanning segment. Residues 348-356 (LSNLDFNIY) lie on the Extracellular side of the membrane. The chain crosses the membrane as a helical span at residues 357 to 377 (LSAAFNALMDLPANLITLFLV). The Cytoplasmic segment spans residues 378–385 (DKLSRRNA). A helical transmembrane segment spans residues 386–406 (LIGFTALGGVSSVLIFALHNM). The Extracellular segment spans residues 407-415 (RIGNHGALQ). The chain crosses the membrane as a helical span at residues 416 to 436 (LALELISYFSACSAFNMEMIY). Residues 437 to 448 (TIELFPTCVRNS) are Cytoplasmic-facing. The chain crosses the membrane as a helical span at residues 449-469 (AIAMARQALVLGGVFSPIMVA). The Extracellular segment spans residues 470–475 (AGRKNA). The chain crosses the membrane as a helical span at residues 476-496 (FWSFGLFGLAIGLLGLFAVGL). The Cytoplasmic portion of the chain corresponds to 497 to 527 (PETRGSDLCDTMDEEECKDRRSKVAVNNVIA).

It belongs to the major facilitator (TC 2.A.1) superfamily. Organic cation transporter (TC 2.A.1.19) family. In terms of tissue distribution, weakly expressed in roots, including tips and initiation site of lateral roots, siliques and flowers, especially in pollen and stigma.

It localises to the vacuole membrane. Its function is as follows. High affinity carnitine transporter involved in the active cellular uptake of carnitine. Also transports organic cations. This is Organic cation/carnitine transporter 2 (OCT2) from Arabidopsis thaliana (Mouse-ear cress).